The following is a 186-amino-acid chain: MSIADIKKTFEQKSARSIESFKSELQKIRTGRAHPGILDQVHVEYYGSMVSISQVANVSLLDARTISVQPWEKGMGPKIEKAIRESDLGLNPSSQGELLRVPMPALNEERRRDLTKVVRGAGEDARIAVRNLRRDANDQAKKLLKDKAISEDDERRSLDEVQKLTDRVIAEIDRLVQSKEAEILAV.

It belongs to the RRF family.

The protein resides in the cytoplasm. Functionally, responsible for the release of ribosomes from messenger RNA at the termination of protein biosynthesis. May increase the efficiency of translation by recycling ribosomes from one round of translation to another. The polypeptide is Ribosome-recycling factor (Methylibium petroleiphilum (strain ATCC BAA-1232 / LMG 22953 / PM1)).